Consider the following 302-residue polypeptide: MNLPIVKGEYRKDYNLKHLTWFKVGGNAEIFFKPVDSEDLASFLVQNKQKLPITTFGAGSNIIIRDGGIEGVTIKLGQNFSNIDFTDDGHLIVGSSCLNFSLAKFCQVNAISGFEFLVGIPGTIGGGVAMNAGAYGCEFKDILVRIEAIDFAGNFRTFTNEEIGFKYRGNNLPKDLIILKAVFKVNKGNSEDILARMNEINAARSSTQPIKERTGGSTFANPEGFKSWQLIDKAGLRGYRIGDASISELHCNFMINNGNATAKELEDLGNFVQQKVFEDSGIKLNWEIKRIGKVSSRGLTTG.

One can recognise an FAD-binding PCMH-type domain in the interval 23 to 188; the sequence is KVGGNAEIFF…LKAVFKVNKG (166 aa). The active site involves Arg-168. The active-site Proton donor is Ser-217. The active site involves Glu-287.

It belongs to the MurB family. FAD is required as a cofactor.

The protein resides in the cytoplasm. The enzyme catalyses UDP-N-acetyl-alpha-D-muramate + NADP(+) = UDP-N-acetyl-3-O-(1-carboxyvinyl)-alpha-D-glucosamine + NADPH + H(+). Its pathway is cell wall biogenesis; peptidoglycan biosynthesis. In terms of biological role, cell wall formation. This chain is UDP-N-acetylenolpyruvoylglucosamine reductase, found in Rickettsia bellii (strain RML369-C).